Here is a 141-residue protein sequence, read N- to C-terminus: Ribosome maturation factor RimP (141 aa).

Belongs to the RimP family.

The protein localises to the cytoplasm. In terms of biological role, required for maturation of 30S ribosomal subunits. This is Ribosome maturation factor RimP from Laribacter hongkongensis (strain HLHK9).